We begin with the raw amino-acid sequence, 412 residues long: Alpha-1-antiproteinase (412 aa).

An N-terminal signal peptide occupies residues 1–24 (MPSSISWGLLLLAGLCCLAPGSLA). Ser33 is subject to Phosphoserine. 4 N-linked (GlcNAc...) asparagine glycosylation sites follow: Asn65, Asn102, Asn165, and Asn266. Residues 368 to 387 (GVTVLEAIPMSLPPDVRFDR) are RCL. A Phosphoserine modification is found at Ser378.

It belongs to the serpin family. As to quaternary structure, interacts with CELA2A. Interacts with ERGIC3 and LMAN1/ERGIC53. Interacts with PRSS1/Trypsin. As to expression, plasma.

The protein localises to the secreted. Inhibitor of serine proteases. This chain is Alpha-1-antiproteinase, found in Callosciurus caniceps (Gray-bellied squirrel).